We begin with the raw amino-acid sequence, 231 residues long: MQDPKVVIALDFDVKKDALDFVDRIDPSQCRLKVGKEMFTYFGPEFVRTLVAKEFDVFLDLKFHDIPNTVAKACIAAADLGVWMVNVHASGGEDMMIRAREGLAQFGQDKPHLIAVTVLTSMDKRQLSQIGIQSSPMEHVLTLASLTKQAGLDGVVCSAQEAAMLKETLGKEFMLVTPGIRPQGSDVGDQKRIMTPQEAMQVGVDYMVIGRPITQAKDPVAALDAINVSIA.

Substrate-binding positions include aspartate 11, lysine 33, 60 to 69 (DLKFHDIPNT), threonine 120, arginine 181, glutamine 190, glycine 210, and arginine 211. The Proton donor role is filled by lysine 62.

The protein belongs to the OMP decarboxylase family. Type 1 subfamily. As to quaternary structure, homodimer.

The catalysed reaction is orotidine 5'-phosphate + H(+) = UMP + CO2. It participates in pyrimidine metabolism; UMP biosynthesis via de novo pathway; UMP from orotate: step 2/2. Functionally, catalyzes the decarboxylation of orotidine 5'-monophosphate (OMP) to uridine 5'-monophosphate (UMP). The protein is Orotidine 5'-phosphate decarboxylase of Pseudoalteromonas atlantica (strain T6c / ATCC BAA-1087).